Here is a 113-residue protein sequence, read N- to C-terminus: ATP-dependent Clp protease adapter protein ClpS (113 aa).

It belongs to the ClpS family. In terms of assembly, binds to the N-terminal domain of the chaperone ClpA.

Involved in the modulation of the specificity of the ClpAP-mediated ATP-dependent protein degradation. The protein is ATP-dependent Clp protease adapter protein ClpS of Corynebacterium diphtheriae (strain ATCC 700971 / NCTC 13129 / Biotype gravis).